A 468-amino-acid polypeptide reads, in one-letter code: UDP-N-acetylmuramate--L-alanine ligase (468 aa).

114–120 (GTHGKTT) is a binding site for ATP.

The protein belongs to the MurCDEF family.

It localises to the cytoplasm. The catalysed reaction is UDP-N-acetyl-alpha-D-muramate + L-alanine + ATP = UDP-N-acetyl-alpha-D-muramoyl-L-alanine + ADP + phosphate + H(+). The protein operates within cell wall biogenesis; peptidoglycan biosynthesis. In terms of biological role, cell wall formation. The polypeptide is UDP-N-acetylmuramate--L-alanine ligase (Methylocella silvestris (strain DSM 15510 / CIP 108128 / LMG 27833 / NCIMB 13906 / BL2)).